The primary structure comprises 705 residues: Polyribonucleotide nucleotidyltransferase (705 aa).

Mg(2+) is bound by residues Asp487 and Asp493. Positions Pro554–Ile613 constitute a KH domain. The S1 motif domain maps to Gly623–Lys691.

It belongs to the polyribonucleotide nucleotidyltransferase family. Requires Mg(2+) as cofactor.

The protein resides in the cytoplasm. The catalysed reaction is RNA(n+1) + phosphate = RNA(n) + a ribonucleoside 5'-diphosphate. Its function is as follows. Involved in mRNA degradation. Catalyzes the phosphorolysis of single-stranded polyribonucleotides processively in the 3'- to 5'-direction. This Oceanobacillus iheyensis (strain DSM 14371 / CIP 107618 / JCM 11309 / KCTC 3954 / HTE831) protein is Polyribonucleotide nucleotidyltransferase.